A 401-amino-acid chain; its full sequence is ATP phosphoribosyltransferase regulatory subunit (401 aa).

This sequence belongs to the class-II aminoacyl-tRNA synthetase family. HisZ subfamily. As to quaternary structure, heteromultimer composed of HisG and HisZ subunits.

The protein resides in the cytoplasm. Its pathway is amino-acid biosynthesis; L-histidine biosynthesis; L-histidine from 5-phospho-alpha-D-ribose 1-diphosphate: step 1/9. Functionally, required for the first step of histidine biosynthesis. May allow the feedback regulation of ATP phosphoribosyltransferase activity by histidine. This chain is ATP phosphoribosyltransferase regulatory subunit, found in Cyanothece sp. (strain PCC 7425 / ATCC 29141).